We begin with the raw amino-acid sequence, 509 residues long: NADH-quinone oxidoreductase subunit M (509 aa).

Helical transmembrane passes span 1–21 (MILP…WIAE), 30–50 (WIAL…WATG), 87–107 (LSLL…LCSW), 123–143 (WILG…FFFF), 176–196 (FFIF…GLVF), 223–243 (WLLM…VPVH), 261–281 (LAGI…LPLF), 288–308 (FAPI…LLSF), 316–336 (LVAY…YSGS), 342–362 (GVVV…ILCG), 376–396 (MGGL…FASA), 422–442 (VIIV…LIMI), and 467–487 (VLGL…VLDI).

The protein belongs to the complex I subunit 4 family. Composed of 13 different subunits. Subunits NuoA, H, J, K, L, M, N constitute the membrane sector of the complex.

It is found in the cell inner membrane. It carries out the reaction a quinone + NADH + 5 H(+)(in) = a quinol + NAD(+) + 4 H(+)(out). NDH-1 shuttles electrons from NADH, via FMN and iron-sulfur (Fe-S) centers, to quinones in the respiratory chain. The immediate electron acceptor for the enzyme in this species is believed to be ubiquinone. Couples the redox reaction to proton translocation (for every two electrons transferred, four hydrogen ions are translocated across the cytoplasmic membrane), and thus conserves the redox energy in a proton gradient. The polypeptide is NADH-quinone oxidoreductase subunit M (nuoM) (Pseudomonas aeruginosa (strain ATCC 15692 / DSM 22644 / CIP 104116 / JCM 14847 / LMG 12228 / 1C / PRS 101 / PAO1)).